A 529-amino-acid chain; its full sequence is uncharacterized protein (529 aa).

Residues 157 to 410 form the Radical SAM core domain; that stretch reads DFPHIICEIE…FKNRVRENID (254 aa). Positions 171, 176, and 179 each coordinate [4Fe-4S] cluster.

The cofactor is [4Fe-4S] cluster.

This is an uncharacterized protein from Archaeoglobus fulgidus (strain ATCC 49558 / DSM 4304 / JCM 9628 / NBRC 100126 / VC-16).